Here is a 377-residue protein sequence, read N- to C-terminus: Aspartate aminotransferase (377 aa).

Residues Gly-37, Trp-123, and Asn-173 each contribute to the L-aspartate site. Lys-234 carries the N6-(pyridoxal phosphate)lysine modification. Arg-353 provides a ligand contact to L-aspartate.

This sequence belongs to the class-I pyridoxal-phosphate-dependent aminotransferase family. As to quaternary structure, homodimer. Pyridoxal 5'-phosphate is required as a cofactor.

It localises to the cytoplasm. The catalysed reaction is L-aspartate + 2-oxoglutarate = oxaloacetate + L-glutamate. This chain is Aspartate aminotransferase (aspC), found in Thermotoga maritima (strain ATCC 43589 / DSM 3109 / JCM 10099 / NBRC 100826 / MSB8).